Reading from the N-terminus, the 868-residue chain is MQNAESWFKKYWHLSVLVIAALISVKLRILNPWNSVFTWTVRLGGNDPWYYYRLIENTIHNFPHRIWFDPFTYYPYGSYTHFGPFLVYLGSIAGIIFSATSGESLRAVLAFIPAIGGVLAILPVYLLTREVFDKRAAVIAAFLIAIVPGQFLQRSILGFNDHHIWEAFWQVSALGTFLLAYNRWKGHDLSHNLTARQMAYPVIAGITIGLYVLSWGAGFIIAPIILAFMFFAFVLAGFVNADRKNLSLVAVVTFAVSALIYLPFAFNYPGFSTIFYSPFQLLVLLGSAVIAAAFYQIEKWNDVGFFERVGLGRKGMPLAVIVLTALIMGLFFVISPDFARNLLSVVRVVQPKGGALTIAEVYPFFFTHNGEFTLTNAVLHFGALFFFGMAGILYSAYRFLKRRSFPEMALLIWAIAMFIALWGQNRFAYYFAAVSAVYSALALSVVFDKLHLYRALENAIGARNKLSYFRVAFALLIALAAIYPTYILADAQSSYAGGPNKQWYDALTWMRENTPDGEKYDEYYLQLYPTPQSNKEPFSYPFETYGVISWWDYGHWIEAVAHRMPIANPFQAGIGNKYNNVPGASSFFTAENESYAEFVAEKLNVKYVVSDIEMETGKYYAMAVWAEGDLPLAEKYYGGYFYYSPTGTFGYANSQWDIPLNSIIIPLRIPSELYYSTMEAKLHLFDGSGLSHYRMIYESDYPAEWKSYSSQVNLNNESQVLQTALYEAVMRARYGVSPTMGTQEVLYKYAYTQLYEKKMGIPVKIAPSGYVKIFERVKGAVVTGKVSANVTEVSVNATIKTNQNRTFEYWQTVEVKNGTYTVVLPYSHNSDYPVKPITPYHIKAGNVVKEITIYESQVQNGEIIQLDL.

The Cytoplasmic segment spans residues 1–16 (MQNAESWFKKYWHLSV). A helical membrane pass occupies residues 17-36 (LVIAALISVKLRILNPWNSV). The Extracellular segment spans residues 37–101 (FTWTVRLGGN…IAGIIFSATS (65 aa)). The DXD motif 1 signature appears at 45 to 47 (GND). Asp47 is a Mn(2+) binding site. His81 is an a glycophospholipid binding site. The chain crosses the membrane as a helical span at residues 102-131 (GESLRAVLAFIPAIGGVLAILPVYLLTREV). At 132–133 (FD) the chain is on the cytoplasmic side. Residues 134 to 153 (KRAAVIAAFLIAIVPGQFLQ) form a helical membrane-spanning segment. The Extracellular portion of the chain corresponds to 154-162 (RSILGFNDH). Asp161 contributes to the Mn(2+) binding site. A DXD motif 2 motif is present at residues 161–163 (DHH). An a glycophospholipid-binding site is contributed by His162. Residue His163 participates in Mn(2+) binding. Residues 163 to 184 (HIWEAFWQVSALGTFLLAYNRW) form a helical membrane-spanning segment. At 185–199 (KGHDLSHNLTARQMA) the chain is on the cytoplasmic side. Residues 200 to 212 (YPVIAGITIGLYV) traverse the membrane as a helical segment. The Extracellular portion of the chain corresponds to 213-215 (LSW). The chain crosses the membrane as a helical span at residues 216-238 (GAGFIIAPIILAFMFFAFVLAGF). Over 239–241 (VNA) the chain is Cytoplasmic. A helical transmembrane segment spans residues 242-262 (DRKNLSLVAVVTFAVSALIYL). Topologically, residues 263–279 (PFAFNYPGFSTIFYSPF) are extracellular. A helical transmembrane segment spans residues 280 to 303 (QLLVLLGSAVIAAAFYQIEKWNDV). The Cytoplasmic portion of the chain corresponds to 304-312 (GFFERVGLG). The chain crosses the membrane as a helical span at residues 313 to 330 (RKGMPLAVIVLTALIMGL). At 331–373 (FFVISPDFARNLLSVVRVVQPKGGALTIAEVYPFFFTHNGEFT) the chain is on the extracellular side. A TIXE motif motif is present at residues 357–360 (TIAE). The helical transmembrane segment at 374–396 (LTNAVLHFGALFFFGMAGILYSA) threads the bilayer. Over 397–404 (YRFLKRRS) the chain is Cytoplasmic. The chain crosses the membrane as a helical span at residues 405-423 (FPEMALLIWAIAMFIALWG). Residues 424-427 (QNRF) are Extracellular-facing. A glycophospholipid is bound at residue Arg426. A helical transmembrane segment spans residues 428 to 452 (AYYFAAVSAVYSALALSVVFDKLHL). The Cytoplasmic segment spans residues 453–468 (YRALENAIGARNKLSY). A helical membrane pass occupies residues 469 to 494 (FRVAFALLIALAAIYPTYILADAQSS). The Extracellular portion of the chain corresponds to 495–868 (YAGGPNKQWY…QNGEIIQLDL (374 aa)). The interacts with target acceptor peptide in protein substrate stretch occupies residues 550–552 (WWD). Positions 550 to 554 (WWDYG) match the WWDYG motif motif. Residues 613–622 (EMETGKYYAM) carry the DKi motif motif.

The protein belongs to the STT3 family. Requires Mg(2+) as cofactor. It depends on Mn(2+) as a cofactor. The cofactor is Zn(2+).

Its subcellular location is the cell membrane. It catalyses the reaction an archaeal dolichyl phosphooligosaccharide + [protein]-L-asparagine = an archaeal dolichyl phosphate + a glycoprotein with the oligosaccharide chain attached by N-beta-D-glycosyl linkage to a protein L-asparagine.. It functions in the pathway protein modification; protein glycosylation. Its function is as follows. Oligosaccharyl transferase (OST) that catalyzes the initial transfer of a defined glycan (a glucose-linked heptasaccharide composed of 3 Glc, 2 Man, 2 Gal and a sulfate for A.fulgidus AglB-L) from the lipid carrier dolichol-monophosphate to an asparagine residue within an Asn-X-Ser/Thr consensus motif in nascent polypeptide chains, the first step in protein N-glycosylation. The polypeptide is Dolichyl-phosphooligosaccharide-protein glycotransferase 3 (aglB3) (Archaeoglobus fulgidus (strain ATCC 49558 / DSM 4304 / JCM 9628 / NBRC 100126 / VC-16)).